The sequence spans 505 residues: Proton-coupled zinc antiporter SLC30A1 (505 aa).

Residues 1–10 (MGCWGRNRGR) are Cytoplasmic-facing. The chain crosses the membrane as a helical span at residues 11–31 (LLCMLALTFMFMVLEVVVSRV). At 32 to 35 (TSSL) the chain is on the extracellular side. The chain crosses the membrane as a helical span at residues 36–56 (AMLSDSFHMLSDVLALVVALV). The Zn(2+) site is built by His43 and Asp47. Topologically, residues 57–80 (AERFARRTHATQKNTFGWIRAEVM) are cytoplasmic. The helical transmembrane segment at 81–101 (GALVNAIFLTGLCFAILLEAI) threads the bilayer. Topologically, residues 102-113 (ERFVEPHEMQQP) are extracellular. A helical membrane pass occupies residues 114-134 (LVVLGVGVAGLLVNVLGLCLF). The Cytoplasmic portion of the chain corresponds to 135 to 246 (HHHSGFSQDS…RAGQLNMRGV (112 aa)). Residues 142–215 (QDSGHSHSHG…DPEKPRSGDT (74 aa)) are disordered. Over residues 187–199 (TNTLVANTSNSNG) the composition is skewed to polar residues. A compositionally biased stretch (basic and acidic residues) spans 203-214 (DPADPEKPRSGD). Residues 247-267 (FLHVLGDALGSVIVVVNALVF) form a helical membrane-spanning segment. Positions 249 and 253 each coordinate Zn(2+). Residues 268-306 (YFSWKGCSEGDFCVNPCFPDPCKAFVEIINSTHASVYEA) are Extracellular-facing. N-linked (GlcNAc...) asparagine glycosylation is present at Asn297. The chain crosses the membrane as a helical span at residues 307 to 327 (GPCWVLYLDPTLCVVMVCILL). At 328 to 505 (YTTYPLLKES…MPNKQPESSL (178 aa)) the chain is on the cytoplasmic side. Ser504 carries the phosphoserine modification.

Belongs to the cation diffusion facilitator (CDF) transporter (TC 2.A.4) family. SLC30A subfamily. In terms of assembly, homodimer. Interacts with TMEM163. Interacts and forms a complex with TMC6 and TMC8; the interaction regulates zinc transport into the ER.

The protein localises to the cell membrane. It is found in the basolateral cell membrane. It localises to the cytoplasmic vesicle membrane. The protein resides in the cytoplasm. Its subcellular location is the endoplasmic reticulum membrane. The protein localises to the golgi apparatus membrane. It is found in the nucleus membrane. The catalysed reaction is Zn(2+)(in) + 2 H(+)(out) = Zn(2+)(out) + 2 H(+)(in). Its function is as follows. Zinc ion:proton antiporter that could function at the plasma membrane mediating zinc efflux from cells against its electrochemical gradient protecting them from intracellular zinc accumulation and toxicity. Alternatively, could prevent the transport to the plasma membrane of CACNB2, the L-type calcium channels regulatory subunit, through a yet to be defined mechanism. By modulating the expression of these channels at the plasma membrane, could prevent calcium and zinc influx into cells. By the same mechanism, could also prevent L-type calcium channels-mediated heavy metal influx into cells. In some cells, could also function as a zinc ion:proton antiporter mediating zinc entry into the lumen of cytoplasmic vesicles. In macrophages, can increase zinc ions concentration into the lumen of cytoplasmic vesicles containing engulfed bacteria and could help inactivate them. Forms a complex with TMC6/EVER1 and TMC8/EVER2 at the ER membrane of keratynocytes which facilitates zinc uptake into the ER. Down-regulates the activity of transcription factors induced by zinc and cytokines. This Macaca fascicularis (Crab-eating macaque) protein is Proton-coupled zinc antiporter SLC30A1.